The following is a 263-amino-acid chain: Putative TATA-binding protein pB263R (263 aa).

Belongs to the asfivirus B263R family.

Its function is as follows. Putative TATA-binding protein. This chain is Putative TATA-binding protein pB263R, found in African swine fever virus (isolate Pig/Kenya/KEN-50/1950) (ASFV).